The following is a 95-amino-acid chain: Small integral membrane protein 26 (95 aa).

Residues 13–35 (MSVVYGIGTWSVLGSLLYYSRTM) traverse the membrane as a helical segment.

The protein belongs to the SMIM26 family. As to quaternary structure, interacts with AGK and SLC25A11. In terms of tissue distribution, detected in kidney (at protein level).

The protein localises to the mitochondrion outer membrane. Functionally, may play a role in cell viability. The protein is Small integral membrane protein 26 of Homo sapiens (Human).